We begin with the raw amino-acid sequence, 355 residues long: UDP-N-acetylglucosamine--N-acetylmuramyl-(pentapeptide) pyrophosphoryl-undecaprenol N-acetylglucosamine transferase (355 aa).

UDP-N-acetyl-alpha-D-glucosamine-binding positions include Thr-15–Gly-17, Asn-127, Arg-163, Ser-191, Ile-244, Ala-263–Glu-268, and Gln-288.

Belongs to the glycosyltransferase 28 family. MurG subfamily.

The protein resides in the cell inner membrane. It carries out the reaction di-trans,octa-cis-undecaprenyl diphospho-N-acetyl-alpha-D-muramoyl-L-alanyl-D-glutamyl-meso-2,6-diaminopimeloyl-D-alanyl-D-alanine + UDP-N-acetyl-alpha-D-glucosamine = di-trans,octa-cis-undecaprenyl diphospho-[N-acetyl-alpha-D-glucosaminyl-(1-&gt;4)]-N-acetyl-alpha-D-muramoyl-L-alanyl-D-glutamyl-meso-2,6-diaminopimeloyl-D-alanyl-D-alanine + UDP + H(+). Its pathway is cell wall biogenesis; peptidoglycan biosynthesis. In terms of biological role, cell wall formation. Catalyzes the transfer of a GlcNAc subunit on undecaprenyl-pyrophosphoryl-MurNAc-pentapeptide (lipid intermediate I) to form undecaprenyl-pyrophosphoryl-MurNAc-(pentapeptide)GlcNAc (lipid intermediate II). This chain is UDP-N-acetylglucosamine--N-acetylmuramyl-(pentapeptide) pyrophosphoryl-undecaprenol N-acetylglucosamine transferase, found in Escherichia coli O9:H4 (strain HS).